We begin with the raw amino-acid sequence, 296 residues long: Protein FAM110A (296 aa).

Disordered regions lie at residues 61–97 (NTRQEPVQPPLVRQPLFSPGPRGPVLTPSRRVLPCSG) and 117–192 (PVSP…KSDL). 2 stretches are compositionally biased toward pro residues: residues 139–148 (PATPPRPPPS) and 161–170 (PASPARPYPS).

It belongs to the FAM110 family. May interact with CSPP1.

Its subcellular location is the cytoplasm. It localises to the cytoskeleton. The protein localises to the microtubule organizing center. The protein resides in the centrosome. It is found in the spindle pole. The chain is Protein FAM110A (Fam110a) from Mus musculus (Mouse).